A 151-amino-acid chain; its full sequence is HTH-type transcriptional regulator TcaR (151 aa).

The HTH marR-type domain occupies 1–142 (MVKHLQDHIQ…VRQVLEVINH (142 aa)). Positions 54-77 (ISEITQRQGVNKAAVSRRIKKLID) form a DNA-binding region, H-T-H motif.

Its function is as follows. Involved in the antibiotic teicoplanin susceptibility. Inactivation of the tcaRAB operon leads to teicoplanin resistance. Functionally, is a weak negative regulator of transcription of the icaABD operon. In Staphylococcus aureus (strain COL), this protein is HTH-type transcriptional regulator TcaR (tcaR).